The following is a 272-amino-acid chain: 4-hydroxy-tetrahydrodipicolinate reductase (272 aa).

Position 10-15 (10-15) interacts with NAD(+); the sequence is GAAGRM. Arg-37 provides a ligand contact to NADP(+). Residues 100-102 and 124-127 each bind NAD(+); these read GTT and SGNM. His-157 acts as the Proton donor/acceptor in catalysis. His-158 serves as a coordination point for (S)-2,3,4,5-tetrahydrodipicolinate. Lys-161 functions as the Proton donor in the catalytic mechanism. 167 to 168 is a (S)-2,3,4,5-tetrahydrodipicolinate binding site; that stretch reads GT.

The protein belongs to the DapB family.

It localises to the cytoplasm. The enzyme catalyses (S)-2,3,4,5-tetrahydrodipicolinate + NAD(+) + H2O = (2S,4S)-4-hydroxy-2,3,4,5-tetrahydrodipicolinate + NADH + H(+). The catalysed reaction is (S)-2,3,4,5-tetrahydrodipicolinate + NADP(+) + H2O = (2S,4S)-4-hydroxy-2,3,4,5-tetrahydrodipicolinate + NADPH + H(+). The protein operates within amino-acid biosynthesis; L-lysine biosynthesis via DAP pathway; (S)-tetrahydrodipicolinate from L-aspartate: step 4/4. Functionally, catalyzes the conversion of 4-hydroxy-tetrahydrodipicolinate (HTPA) to tetrahydrodipicolinate. In Methylocella silvestris (strain DSM 15510 / CIP 108128 / LMG 27833 / NCIMB 13906 / BL2), this protein is 4-hydroxy-tetrahydrodipicolinate reductase.